A 568-amino-acid chain; its full sequence is MTPATERDDTDTDVVIVGAGPVGLTLANILGLQGVRTMIVEERATLIDYPRGVGLDDEALRTFQAIGLVDKVLPHTVPNQILRFFDGNRRLLAEMAPPDARFGWPKRNGFVQPMVDAELHAGLARFPHVEVRWGHRMAECEETADGVTVRLDGDPTPVRARYLVGCDGGRSATRRLMGVSFDGTTSPTRWLVVDIANDPLGHPNSEVGADPARPYASISIAHGIRRFEFMIHADETDEQAEDPAFIHRMLGLLVPHPERVEVIRHRVYTHHSRIAGAFRKGRMFLAGDAAHLMPVWQGQGYNSGIRDAANLGWKLAAVVDGRAGDALLDTYDVERRKHARAMIDLSTMVGRVISPTNRHVAAVRDKLIRGASVVPTLKRYVLEMRFKPMPRYEQGAVFHPEAPSPTSPAGTLFIQPRVDSRDAQNVLLDEVLGTGFAVLCWNNNPRALLGADLFDRWKALGARFVAARPLTQLHWTGHDDPDVTVIGDRTGALKGWFDAHAESVLFLRPDRCIAGACIAQRAPEVSTALFGVLHLTQGGGNGHHGADRPVLHVAQSATEPSGTVAGTP.

FAD is bound by residues 13 to 42 and 278 to 288; these read DVVIVGAGPVGLTLANILGLQGVRTMIVEE and FRKGRMFLAGD.

This sequence belongs to the PheA/TfdB FAD monooxygenase family. FAD is required as a cofactor.

It catalyses the reaction 3-(3-hydroxyphenyl)propanoate + NADH + O2 + H(+) = 3-(2,3-dihydroxyphenyl)propanoate + NAD(+) + H2O. The enzyme catalyses (2E)-3-(3-hydroxyphenyl)prop-2-enoate + NADH + O2 + H(+) = (2E)-3-(2,3-dihydroxyphenyl)prop-2-enoate + NAD(+) + H2O. Its pathway is aromatic compound metabolism; 3-phenylpropanoate degradation. Its function is as follows. Catalyzes the insertion of one atom of molecular oxygen into position 2 of the phenyl ring of 3-(3-hydroxyphenyl)propionate (3-HPP) and hydroxycinnamic acid (3HCI). The protein is 3-(3-hydroxy-phenyl)propionate/3-hydroxycinnamic acid hydroxylase of Mycobacterium sp. (strain JLS).